A 129-amino-acid chain; its full sequence is Small ribosomal subunit protein uS9 (129 aa).

The disordered stretch occupies residues 107–129; sequence SRTVERKKYGRRKARRSPQFSKR. The span at 114-129 shows a compositional bias: basic residues; sequence KYGRRKARRSPQFSKR.

It belongs to the universal ribosomal protein uS9 family.

In Campylobacter jejuni subsp. jejuni serotype O:23/36 (strain 81-176), this protein is Small ribosomal subunit protein uS9.